A 288-amino-acid chain; its full sequence is 33 kDa chaperonin (288 aa).

2 disulfides stabilise this stretch: Cys-235–Cys-237 and Cys-268–Cys-271.

This sequence belongs to the HSP33 family. Under oxidizing conditions two disulfide bonds are formed involving the reactive cysteines. Under reducing conditions zinc is bound to the reactive cysteines and the protein is inactive.

It is found in the cytoplasm. In terms of biological role, redox regulated molecular chaperone. Protects both thermally unfolding and oxidatively damaged proteins from irreversible aggregation. Plays an important role in the bacterial defense system toward oxidative stress. The protein is 33 kDa chaperonin of Streptococcus suis (strain 98HAH33).